Here is a 415-residue protein sequence, read N- to C-terminus: Protein fuzzy homolog (415 aa).

It belongs to the fuzzy family. In terms of assembly, component of the CPLANE (ciliogenesis and planar polarity effectors) complex, composed of INTU, FUZ and WDPCP. Interacts with CPLANE1 and CPLANE2.

It localises to the cytoplasm. It is found in the cytoskeleton. Its subcellular location is the cilium basal body. Its function is as follows. Probable planar cell polarity effector involved in cilium biogenesis. Proposed to function as core component of the CPLANE (ciliogenesis and planar polarity effectors) complex involved in the recruitment of peripheral IFT-A proteins to basal bodies. May regulate protein and membrane transport to the cilium. May regulate the morphogenesis of hair follicles which depends on functional primary cilia. Binds phosphatidylinositol 3-phosphate with highest affinity, followed by phosphatidylinositol 4-phosphate and phosphatidylinositol 5-phosphate. The polypeptide is Protein fuzzy homolog (Fuz) (Rattus norvegicus (Rat)).